Consider the following 812-residue polypeptide: Probable E3 ubiquitin-protein ligase hulA (812 aa).

The 109-residue stretch at 1–109 folds into the C2 domain; that stretch reads MTCSQPNLRV…QMGGDEMLTR (109 aa). Disordered regions lie at residues 131 to 235 and 250 to 350; these read NLST…WERR and RTTT…YFVD. Polar residues-rich tracts occupy residues 148-165, 174-199, 214-223, and 250-267; these read MQPS…ASTP, ADPT…STIV, SRTNLSSFED, and RTTT…QTSR. A WW 1 domain is found at 226–259; sequence GRLPAGWERREDNLGRTYYVDHNTRTTTWTRPSN. Basic and acidic residues predominate over residues 276-291; it reads LERRAHQSRMLPEDRT. Residues 292 to 306 are compositionally biased toward polar residues; it reads GASSPNLQENQQQAQ. A compositionally biased stretch (low complexity) spans 307–330; sequence TPPAGGSASAVSMMATGATTAGTG. 2 consecutive WW domains span residues 330–363 and 390–423; these read GELP…DPRR and GPLP…DPRL. Residues 479–812 form the HECT domain; sequence SASDLKKRLM…VEETLGFGQE (334 aa). The active-site Glycyl thioester intermediate is C780.

It belongs to the RSP5/NEDD4 family. Interacts with creD.

It is found in the cytoplasm. It catalyses the reaction S-ubiquitinyl-[E2 ubiquitin-conjugating enzyme]-L-cysteine + [acceptor protein]-L-lysine = [E2 ubiquitin-conjugating enzyme]-L-cysteine + N(6)-ubiquitinyl-[acceptor protein]-L-lysine.. It participates in protein modification; protein ubiquitination. Its function is as follows. E3 ubiquitin-protein ligase which accepts ubiquitin from an E2 ubiquitin-conjugating enzyme in the form of a thioester and then directly transfers the ubiquitin to targeted substrates. Probably involved in the regulatory network controlling carbon source utilization. This Aspergillus flavus (strain ATCC 200026 / FGSC A1120 / IAM 13836 / NRRL 3357 / JCM 12722 / SRRC 167) protein is Probable E3 ubiquitin-protein ligase hulA (hulA).